The following is a 255-amino-acid chain: tRNA-cytidine(32) 2-sulfurtransferase (255 aa).

Positions 37 to 42 (SGGKDS) match the PP-loop motif motif. Positions 112, 115, and 202 each coordinate [4Fe-4S] cluster.

This sequence belongs to the TtcA family. In terms of assembly, homodimer. Mg(2+) serves as cofactor. It depends on [4Fe-4S] cluster as a cofactor.

It localises to the cytoplasm. It carries out the reaction cytidine(32) in tRNA + S-sulfanyl-L-cysteinyl-[cysteine desulfurase] + AH2 + ATP = 2-thiocytidine(32) in tRNA + L-cysteinyl-[cysteine desulfurase] + A + AMP + diphosphate + H(+). The protein operates within tRNA modification. Catalyzes the ATP-dependent 2-thiolation of cytidine in position 32 of tRNA, to form 2-thiocytidine (s(2)C32). The sulfur atoms are provided by the cysteine/cysteine desulfurase (IscS) system. This chain is tRNA-cytidine(32) 2-sulfurtransferase, found in Citrifermentans bemidjiense (strain ATCC BAA-1014 / DSM 16622 / JCM 12645 / Bem) (Geobacter bemidjiensis).